The chain runs to 336 residues: Foldase protein PrsA (336 aa).

An N-terminal signal peptide occupies residues 1–22 (MKSAKKLLSVLCLGIFILTFTA). C23 is lipidated: N-palmitoyl cysteine. C23 carries the S-diacylglycerol cysteine lipid modification. One can recognise a PpiC domain in the interval 194–286 (PNTMNVSHIL…WGYHIIKVNS (93 aa)).

It belongs to the PrsA family.

The protein localises to the cell membrane. The enzyme catalyses [protein]-peptidylproline (omega=180) = [protein]-peptidylproline (omega=0). Plays a major role in protein secretion by helping the post-translocational extracellular folding of several secreted proteins. The chain is Foldase protein PrsA from Clostridium botulinum (strain ATCC 19397 / Type A).